The chain runs to 343 residues: ATP phosphoribosyltransferase regulatory subunit (343 aa).

The tract at residues 324–343 (RANGRAKRPARPRRSPPRPR) is disordered. The span at 327-343 (GRAKRPARPRRSPPRPR) shows a compositional bias: basic residues.

The protein belongs to the class-II aminoacyl-tRNA synthetase family. HisZ subfamily. As to quaternary structure, heteromultimer composed of HisG and HisZ subunits.

The protein localises to the cytoplasm. It functions in the pathway amino-acid biosynthesis; L-histidine biosynthesis; L-histidine from 5-phospho-alpha-D-ribose 1-diphosphate: step 1/9. Required for the first step of histidine biosynthesis. May allow the feedback regulation of ATP phosphoribosyltransferase activity by histidine. In Anaeromyxobacter sp. (strain Fw109-5), this protein is ATP phosphoribosyltransferase regulatory subunit.